The following is a 125-amino-acid chain: Small ribosomal subunit protein uS13 (125 aa).

It belongs to the universal ribosomal protein uS13 family. Part of the 30S ribosomal subunit. Forms a loose heterodimer with protein S19. Forms two bridges to the 50S subunit in the 70S ribosome.

Located at the top of the head of the 30S subunit, it contacts several helices of the 16S rRNA. In the 70S ribosome it contacts the 23S rRNA (bridge B1a) and protein L5 of the 50S subunit (bridge B1b), connecting the 2 subunits; these bridges are implicated in subunit movement. Contacts the tRNAs in the A and P-sites. The sequence is that of Small ribosomal subunit protein uS13 from Rickettsia felis (strain ATCC VR-1525 / URRWXCal2) (Rickettsia azadi).